The following is a 238-amino-acid chain: uncharacterized protein (238 aa).

Positions 219–238 (EESINNNVDDTDDIDNDNFI) are disordered. Acidic residues predominate over residues 227–238 (DDTDDIDNDNFI).

This is an uncharacterized protein from Buchnera aphidicola subsp. Acyrthosiphon pisum (strain APS) (Acyrthosiphon pisum symbiotic bacterium).